Consider the following 361-residue polypeptide: Phosphoserine aminotransferase (361 aa).

Residue Arg-43 participates in L-glutamate binding. Residues 77 to 78, Trp-103, Thr-153, Asp-173, and Gln-196 contribute to the pyridoxal 5'-phosphate site; that span reads AS. The residue at position 197 (Lys-197) is an N6-(pyridoxal phosphate)lysine. A pyridoxal 5'-phosphate-binding site is contributed by 238-239; sequence NT.

It belongs to the class-V pyridoxal-phosphate-dependent aminotransferase family. SerC subfamily. In terms of assembly, homodimer. The cofactor is pyridoxal 5'-phosphate.

It is found in the cytoplasm. It catalyses the reaction O-phospho-L-serine + 2-oxoglutarate = 3-phosphooxypyruvate + L-glutamate. The enzyme catalyses 4-(phosphooxy)-L-threonine + 2-oxoglutarate = (R)-3-hydroxy-2-oxo-4-phosphooxybutanoate + L-glutamate. It participates in amino-acid biosynthesis; L-serine biosynthesis; L-serine from 3-phospho-D-glycerate: step 2/3. Its pathway is cofactor biosynthesis; pyridoxine 5'-phosphate biosynthesis; pyridoxine 5'-phosphate from D-erythrose 4-phosphate: step 3/5. Its function is as follows. Catalyzes the reversible conversion of 3-phosphohydroxypyruvate to phosphoserine and of 3-hydroxy-2-oxo-4-phosphonooxybutanoate to phosphohydroxythreonine. The polypeptide is Phosphoserine aminotransferase (Ectopseudomonas mendocina (strain ymp) (Pseudomonas mendocina)).